The following is a 192-amino-acid chain: NF-kappa-B inhibitor-interacting Ras-like protein 1 (192 aa).

11–18 lines the GTP pocket; sequence GLLSVGKT. The short motif at 35-43 is the Effector region element; the sequence is DCETMEDVY. The segment at 58-93 is interactions with NFKBIA and NFKBIB; sequence HLYDTRGLQEGVELPKHYFSFADGFVLVYSVNNLES. GTP is bound by residues 61-65 and 120-123; these read DTRGL and NKID. Residues 168 to 192 are disordered; that stretch reads LSQPQSKSSFPLPGRKNKGNSSSEN.

Belongs to the small GTPase superfamily. Ras family. KappaB-Ras subfamily. In terms of assembly, interacts with both NF-kappa-B inhibitor alpha (NFKBIA) and beta (NFKBIB) in vitro. However, it probably only interacts with NFKBIB in vivo. Forms a complex with NFKBIB and NF-kappa-B heterodimer (p50/NFKB1 and p65/RELA). Also interacts with c-Rel (REL).

The protein localises to the cytoplasm. Atypical Ras-like protein that acts as a potent regulator of NF-kappa-B activity by preventing the degradation of NF-kappa-B inhibitor beta (NFKBIB) by most signals, explaining why NFKBIB is more resistant to degradation. May act by blocking phosphorylation of NFKBIB and mediating cytoplasmic retention of p65/RELA NF-kappa-B subunit. It is unclear whether it acts as a GTPase. Both GTP- and GDP-bound forms block phosphorylation of NFKBIB. The chain is NF-kappa-B inhibitor-interacting Ras-like protein 1 (NKIRAS1) from Macaca fascicularis (Crab-eating macaque).